Here is a 163-residue protein sequence, read N- to C-terminus: NADH-quinone oxidoreductase subunit I (163 aa).

2 4Fe-4S ferredoxin-type domains span residues 54–84 (LRRY…IESD) and 94–123 (TRYD…ETPI). The [4Fe-4S] cluster site is built by Cys-64, Cys-67, Cys-70, Cys-74, Cys-103, Cys-106, Cys-109, and Cys-113.

The protein belongs to the complex I 23 kDa subunit family. As to quaternary structure, NDH-1 is composed of 14 different subunits. Subunits NuoA, H, J, K, L, M, N constitute the membrane sector of the complex. Requires [4Fe-4S] cluster as cofactor.

It localises to the cell inner membrane. The enzyme catalyses a quinone + NADH + 5 H(+)(in) = a quinol + NAD(+) + 4 H(+)(out). Its function is as follows. NDH-1 shuttles electrons from NADH, via FMN and iron-sulfur (Fe-S) centers, to quinones in the respiratory chain. The immediate electron acceptor for the enzyme in this species is believed to be ubiquinone. Couples the redox reaction to proton translocation (for every two electrons transferred, four hydrogen ions are translocated across the cytoplasmic membrane), and thus conserves the redox energy in a proton gradient. The polypeptide is NADH-quinone oxidoreductase subunit I (Cupriavidus pinatubonensis (strain JMP 134 / LMG 1197) (Cupriavidus necator (strain JMP 134))).